Consider the following 1101-residue polypeptide: Endoglucanase C (1101 aa).

The N-terminal stretch at 1–32 (MVSRRSSQARGALTAVVATLALALAGSGTALA) is a signal peptide. 2 CBM-cenC domains span residues 64 to 173 (LCVA…TFCL) and 212 to 318 (MCVD…EFCI). Positions 329–880 (PPPGYEPDTG…PDGCAPSACY (552 aa)) are catalytic. Residue Asp-506 is the Nucleophile of the active site. Residue His-831 is part of the active site. A disordered region spans residues 838–865 (QLDPSLPSPPPGSLAGGPNSQAATWDPT). Residues Asp-882 and Glu-891 contribute to the active site. 2 Ig-like domains span residues 918–1006 (TAPV…LTVE) and 1008–1097 (AAPV…LAVQ).

This sequence belongs to the glycosyl hydrolase 9 (cellulase E) family.

It catalyses the reaction Endohydrolysis of (1-&gt;4)-beta-D-glucosidic linkages in cellulose, lichenin and cereal beta-D-glucans.. In terms of biological role, the biological conversion of cellulose to glucose generally requires three types of hydrolytic enzymes: (1) Endoglucanases which cut internal beta-1,4-glucosidic bonds; (2) Exocellobiohydrolases that cut the disaccharide cellobiose from the non-reducing end of the cellulose polymer chain; (3) Beta-1,4-glucosidases which hydrolyze the cellobiose and other short cello-oligosaccharides to glucose. The chain is Endoglucanase C (cenC) from Cellulomonas fimi (strain ATCC 484 / DSM 20113 / JCM 1341 / CCUG 24087 / LMG 16345 / NBRC 15513 / NCIMB 8980 / NCTC 7547 / NRS-133).